The sequence spans 439 residues: Methylenetetrahydrofolate--tRNA-(uracil-5-)-methyltransferase TrmFO (439 aa).

8 to 13 (GAGLAG) is an FAD binding site.

It belongs to the MnmG family. TrmFO subfamily. The cofactor is FAD.

It localises to the cytoplasm. The catalysed reaction is uridine(54) in tRNA + (6R)-5,10-methylene-5,6,7,8-tetrahydrofolate + NADH + H(+) = 5-methyluridine(54) in tRNA + (6S)-5,6,7,8-tetrahydrofolate + NAD(+). It catalyses the reaction uridine(54) in tRNA + (6R)-5,10-methylene-5,6,7,8-tetrahydrofolate + NADPH + H(+) = 5-methyluridine(54) in tRNA + (6S)-5,6,7,8-tetrahydrofolate + NADP(+). Functionally, catalyzes the folate-dependent formation of 5-methyl-uridine at position 54 (M-5-U54) in all tRNAs. This Magnetococcus marinus (strain ATCC BAA-1437 / JCM 17883 / MC-1) protein is Methylenetetrahydrofolate--tRNA-(uracil-5-)-methyltransferase TrmFO.